Here is a 390-residue protein sequence, read N- to C-terminus: GTPase Obg (390 aa).

The 159-residue stretch at 1-159 folds into the Obg domain; it reads MKFVDEASIL…RELLLELMLL (159 aa). The tract at residues 127–147 is disordered; that stretch reads NTRFKSSVNRTPRQKTNGTPG. Residues 129–145 are compositionally biased toward polar residues; the sequence is RFKSSVNRTPRQKTNGT. The region spanning 160–333 is the OBG-type G domain; sequence ADVGMLGMPN…LCWDVMTFII (174 aa). GTP is bound by residues 166 to 173, 191 to 195, 213 to 216, 283 to 286, and 314 to 316; these read GMPNAGKS, FTTLV, DIPG, NKID, and SAA. Ser-173 and Thr-193 together coordinate Mg(2+).

It belongs to the TRAFAC class OBG-HflX-like GTPase superfamily. OBG GTPase family. In terms of assembly, monomer. It depends on Mg(2+) as a cofactor.

Its subcellular location is the cytoplasm. Functionally, an essential GTPase which binds GTP, GDP and possibly (p)ppGpp with moderate affinity, with high nucleotide exchange rates and a fairly low GTP hydrolysis rate. Plays a role in control of the cell cycle, stress response, ribosome biogenesis and in those bacteria that undergo differentiation, in morphogenesis control. The chain is GTPase Obg from Escherichia coli O157:H7.